Reading from the N-terminus, the 255-residue chain is Pyrroloquinoline-quinone synthase (255 aa).

The protein belongs to the PqqC family.

It carries out the reaction 6-(2-amino-2-carboxyethyl)-7,8-dioxo-1,2,3,4,7,8-hexahydroquinoline-2,4-dicarboxylate + 3 O2 = pyrroloquinoline quinone + 2 H2O2 + 2 H2O + H(+). It functions in the pathway cofactor biosynthesis; pyrroloquinoline quinone biosynthesis. Its function is as follows. Ring cyclization and eight-electron oxidation of 3a-(2-amino-2-carboxyethyl)-4,5-dioxo-4,5,6,7,8,9-hexahydroquinoline-7,9-dicarboxylic-acid to PQQ. The polypeptide is Pyrroloquinoline-quinone synthase (Cereibacter sphaeroides (strain ATCC 17023 / DSM 158 / JCM 6121 / CCUG 31486 / LMG 2827 / NBRC 12203 / NCIMB 8253 / ATH 2.4.1.) (Rhodobacter sphaeroides)).